We begin with the raw amino-acid sequence, 689 residues long: Glycine--tRNA ligase beta subunit (689 aa).

This sequence belongs to the class-II aminoacyl-tRNA synthetase family. As to quaternary structure, tetramer of two alpha and two beta subunits.

The protein resides in the cytoplasm. It carries out the reaction tRNA(Gly) + glycine + ATP = glycyl-tRNA(Gly) + AMP + diphosphate. The polypeptide is Glycine--tRNA ligase beta subunit (Salmonella agona (strain SL483)).